Here is a 167-residue protein sequence, read N- to C-terminus: MTRPTHPNALIWLLLSIAIIALDQATKAWVLTSLPEYIPVPVIHGFWNWYRSYNTGAAFSFLSDAGGWQMWLFIALALGISGLLTFWLSRTPRREWRSALPYALIIGGGIGNVIDRFLHGHVVDFIQWYVGSYYWPSFNLADSAIVAGAIGIGLLSLFDSKHSPKTP.

3 helical membrane-spanning segments follow: residues 10-30 (LIWL…KAWV), 68-88 (WQMW…TFWL), and 98-118 (SALP…DRFL). Catalysis depends on residues aspartate 124 and aspartate 142. Residues 138–158 (FNLADSAIVAGAIGIGLLSLF) form a helical membrane-spanning segment.

Belongs to the peptidase A8 family.

Its subcellular location is the cell inner membrane. The enzyme catalyses Release of signal peptides from bacterial membrane prolipoproteins. Hydrolyzes -Xaa-Yaa-Zaa-|-(S,diacylglyceryl)Cys-, in which Xaa is hydrophobic (preferably Leu), and Yaa (Ala or Ser) and Zaa (Gly or Ala) have small, neutral side chains.. Its pathway is protein modification; lipoprotein biosynthesis (signal peptide cleavage). In terms of biological role, this protein specifically catalyzes the removal of signal peptides from prolipoproteins. The chain is Lipoprotein signal peptidase from Xylella fastidiosa (strain M23).